Reading from the N-terminus, the 132-residue chain is MANLISFHDVAKHKCKNDCWILIHGKVYDISTFMDEHPGGDNVLLAVTGKDASIDFEDVNHSKDAKELMKKYCIGDVDQSTVPVTQQYIPPWEKESTAAETTKEESGKKLLIYLIPLLILGVAFALRFYNNK.

The region spanning 2 to 78 (ANLISFHDVA…MKKYCIGDVD (77 aa)) is the Cytochrome b5 heme-binding domain. Heme contacts are provided by histidine 37 and histidine 61. The chain crosses the membrane as a helical span at residues 110-129 (LLIYLIPLLILGVAFALRFY).

The protein belongs to the cytochrome b5 family. In terms of assembly, interacts with CER1, BI-1, FAH1 and FAH2.

Its subcellular location is the endoplasmic reticulum membrane. Functionally, membrane bound hemoprotein which function as an electron carrier for several membrane bound oxygenases, including fatty acid desaturases. The chain is Cytochrome B5 isoform C from Arabidopsis thaliana (Mouse-ear cress).